The sequence spans 381 residues: Succinyl-diaminopimelate desuccinylase (381 aa).

His-72 is a Zn(2+) binding site. Residue Asp-74 is part of the active site. Position 105 (Asp-105) interacts with Zn(2+). Glu-139 acts as the Proton acceptor in catalysis. Positions 140, 168, and 354 each coordinate Zn(2+).

This sequence belongs to the peptidase M20A family. DapE subfamily. In terms of assembly, homodimer. It depends on Zn(2+) as a cofactor. Co(2+) is required as a cofactor.

The catalysed reaction is N-succinyl-(2S,6S)-2,6-diaminopimelate + H2O = (2S,6S)-2,6-diaminopimelate + succinate. It participates in amino-acid biosynthesis; L-lysine biosynthesis via DAP pathway; LL-2,6-diaminopimelate from (S)-tetrahydrodipicolinate (succinylase route): step 3/3. Functionally, catalyzes the hydrolysis of N-succinyl-L,L-diaminopimelic acid (SDAP), forming succinate and LL-2,6-diaminopimelate (DAP), an intermediate involved in the bacterial biosynthesis of lysine and meso-diaminopimelic acid, an essential component of bacterial cell walls. This chain is Succinyl-diaminopimelate desuccinylase, found in Shewanella sp. (strain MR-7).